The sequence spans 213 residues: Thiamine-phosphate synthase (213 aa).

Residues 40–44 (QFREK) and Asn75 each bind 4-amino-2-methyl-5-(diphosphooxymethyl)pyrimidine. The Mg(2+) site is built by Asp76 and Asp95. Ser113 contacts 4-amino-2-methyl-5-(diphosphooxymethyl)pyrimidine. 139-141 (TPS) is a 2-[(2R,5Z)-2-carboxy-4-methylthiazol-5(2H)-ylidene]ethyl phosphate binding site. 4-amino-2-methyl-5-(diphosphooxymethyl)pyrimidine is bound at residue Lys142. 2-[(2R,5Z)-2-carboxy-4-methylthiazol-5(2H)-ylidene]ethyl phosphate contacts are provided by residues Gly171 and 191-192 (IS).

Belongs to the thiamine-phosphate synthase family. Requires Mg(2+) as cofactor.

It carries out the reaction 2-[(2R,5Z)-2-carboxy-4-methylthiazol-5(2H)-ylidene]ethyl phosphate + 4-amino-2-methyl-5-(diphosphooxymethyl)pyrimidine + 2 H(+) = thiamine phosphate + CO2 + diphosphate. It catalyses the reaction 2-(2-carboxy-4-methylthiazol-5-yl)ethyl phosphate + 4-amino-2-methyl-5-(diphosphooxymethyl)pyrimidine + 2 H(+) = thiamine phosphate + CO2 + diphosphate. The catalysed reaction is 4-methyl-5-(2-phosphooxyethyl)-thiazole + 4-amino-2-methyl-5-(diphosphooxymethyl)pyrimidine + H(+) = thiamine phosphate + diphosphate. Its pathway is cofactor biosynthesis; thiamine diphosphate biosynthesis; thiamine phosphate from 4-amino-2-methyl-5-diphosphomethylpyrimidine and 4-methyl-5-(2-phosphoethyl)-thiazole: step 1/1. Its function is as follows. Condenses 4-methyl-5-(beta-hydroxyethyl)thiazole monophosphate (THZ-P) and 2-methyl-4-amino-5-hydroxymethyl pyrimidine pyrophosphate (HMP-PP) to form thiamine monophosphate (TMP). In Staphylococcus aureus (strain bovine RF122 / ET3-1), this protein is Thiamine-phosphate synthase.